Reading from the N-terminus, the 453-residue chain is Ribulose bisphosphate carboxylase large chain (453 aa).

Positions 1-2 (MS) are excised as a propeptide. Pro3 is subject to N-acetylproline. Position 14 is an N6,N6,N6-trimethyllysine (Lys14). Substrate-binding residues include Asn123 and Thr173. Lys175 acts as the Proton acceptor in catalysis. Residue Lys177 coordinates substrate. Positions 201, 203, and 204 each coordinate Mg(2+). An N6-carboxylysine modification is found at Lys201. Catalysis depends on His294, which acts as the Proton acceptor. Substrate-binding residues include Arg295, His327, and Ser379.

The protein belongs to the RuBisCO large chain family. Type I subfamily. In terms of assembly, heterohexadecamer of 8 large chains and 8 small chains; disulfide-linked. The disulfide link is formed within the large subunit homodimers. Requires Mg(2+) as cofactor. Post-translationally, the disulfide bond which can form in the large chain dimeric partners within the hexadecamer appears to be associated with oxidative stress and protein turnover.

Its subcellular location is the plastid. It localises to the chloroplast. The enzyme catalyses 2 (2R)-3-phosphoglycerate + 2 H(+) = D-ribulose 1,5-bisphosphate + CO2 + H2O. The catalysed reaction is D-ribulose 1,5-bisphosphate + O2 = 2-phosphoglycolate + (2R)-3-phosphoglycerate + 2 H(+). Its function is as follows. RuBisCO catalyzes two reactions: the carboxylation of D-ribulose 1,5-bisphosphate, the primary event in carbon dioxide fixation, as well as the oxidative fragmentation of the pentose substrate in the photorespiration process. Both reactions occur simultaneously and in competition at the same active site. This is Ribulose bisphosphate carboxylase large chain from Sherardia arvensis (Blue field-madder).